Reading from the N-terminus, the 901-residue chain is Translation initiation factor IF-2 (901 aa).

The disordered stretch occupies residues 48–313 (HLNREHGGSS…SSLQQGFTKP (266 aa)). A compositionally biased stretch (polar residues) spans 68–82 (STLSVPGTGGKSKSV). Basic and acidic residues predominate over residues 106–226 (ALAKREAEEQ…RMAEANEGKW (121 aa)). The segment covering 263 to 277 (ARGRGGKAAKQKKGS) has biased composition (basic residues). The span at 278-291 (KLSESKADREEARA) shows a compositional bias: basic and acidic residues. The tr-type G domain maps to 400-569 (PRAPVVTIMG…LLQAEVLELK (170 aa)). Residues 409-416 (GHVDHGKT) form a G1 region. Residue 409 to 416 (GHVDHGKT) participates in GTP binding. The segment at 434 to 438 (GITQH) is G2. The interval 455–458 (DTPG) is G3. Residues 455 to 459 (DTPGH) and 509 to 512 (NKID) each bind GTP. Residues 509–512 (NKID) form a G4 region. The interval 545–547 (SAK) is G5.

The protein belongs to the TRAFAC class translation factor GTPase superfamily. Classic translation factor GTPase family. IF-2 subfamily.

Its subcellular location is the cytoplasm. Its function is as follows. One of the essential components for the initiation of protein synthesis. Protects formylmethionyl-tRNA from spontaneous hydrolysis and promotes its binding to the 30S ribosomal subunits. Also involved in the hydrolysis of GTP during the formation of the 70S ribosomal complex. The polypeptide is Translation initiation factor IF-2 (Edwardsiella ictaluri (strain 93-146)).